The primary structure comprises 157 residues: MPRRGTIERRIPPPDPRYNSVLVQQFINKVMQRGKKSIAEKIVYQAFDLAAERLKKPAMEIFETAIRNAGPVIEVKPRRVGGATYQVPVEVKSDRRQSLAMRWLLMSARARSGKPMYERLAAELIDAYNNTGATIKRKEDVQRMAEANRAFSHYGRF.

The protein belongs to the universal ribosomal protein uS7 family. In terms of assembly, part of the 30S ribosomal subunit. Contacts proteins S9 and S11.

Functionally, one of the primary rRNA binding proteins, it binds directly to 16S rRNA where it nucleates assembly of the head domain of the 30S subunit. Is located at the subunit interface close to the decoding center, probably blocks exit of the E-site tRNA. The chain is Small ribosomal subunit protein uS7 from Roseiflexus castenholzii (strain DSM 13941 / HLO8).